A 303-amino-acid polypeptide reads, in one-letter code: Enoyl-CoA hydratase domain-containing protein 3, mitochondrial (303 aa).

Residues 1 to 17 (MAAVAVLRAFGASGPMC) constitute a mitochondrion transit peptide. The residue at position 110 (K110) is an N6-succinyllysine.

The protein belongs to the enoyl-CoA hydratase/isomerase family. As to expression, expressed in adipocytes. Expressed in blood cells, with higher expression in patients with low coronary lesions.

It is found in the mitochondrion. In terms of biological role, may play a role in fatty acid biosynthesis and insulin sensitivity. This is Enoyl-CoA hydratase domain-containing protein 3, mitochondrial from Homo sapiens (Human).